The chain runs to 71 residues: Small ribosomal subunit protein bS21 (71 aa).

The protein belongs to the bacterial ribosomal protein bS21 family.

This is Small ribosomal subunit protein bS21 from Cellvibrio japonicus (strain Ueda107) (Pseudomonas fluorescens subsp. cellulosa).